Reading from the N-terminus, the 475-residue chain is Argininosuccinate lyase (475 aa).

This sequence belongs to the lyase 1 family. Argininosuccinate lyase subfamily.

The protein localises to the cytoplasm. It carries out the reaction 2-(N(omega)-L-arginino)succinate = fumarate + L-arginine. It functions in the pathway amino-acid biosynthesis; L-arginine biosynthesis; L-arginine from L-ornithine and carbamoyl phosphate: step 3/3. The sequence is that of Argininosuccinate lyase from Streptomyces griseus subsp. griseus (strain JCM 4626 / CBS 651.72 / NBRC 13350 / KCC S-0626 / ISP 5235).